A 420-amino-acid chain; its full sequence is rRNA methyltransferase 3, mitochondrial (420 aa).

The transit peptide at 1 to 40 (MAALVRPARFVVRPLLQVVQAWDLDARRWVRALRRSPVKV) directs the protein to the mitochondrion. Residues 49–88 (EQKRAPGKQPRKAPSEASAQEQREKQPLEESASRAPSTWE) are disordered. The span at 69 to 80 (EQREKQPLEESA) shows a compositional bias: basic and acidic residues. Residues Gly356, Ile380, and Leu389 each contribute to the S-adenosyl-L-methionine site.

The protein belongs to the class IV-like SAM-binding methyltransferase superfamily. RNA methyltransferase TrmH family. In terms of tissue distribution, expressed at same level in normal liver and hepatocarcinoma.

The protein resides in the mitochondrion. The enzyme catalyses guanosine(1370) in 16S rRNA + S-adenosyl-L-methionine = 2'-O-methylguanosine(1370) in 16S rRNA + S-adenosyl-L-homocysteine + H(+). Its function is as follows. S-adenosyl-L-methionine-dependent 2'-O-ribose methyltransferase that catalyzes the formation of 2'-O-methylguanosine at position 1370 (Gm1370) in the 16S mitochondrial large subunit ribosomal RNA (mtLSU rRNA), a conserved modification in the peptidyl transferase domain of the mtLSU rRNA. Also required for formation of 2'-O-methyluridine at position 1369 (Um1369) mediated by MRM2. This chain is rRNA methyltransferase 3, mitochondrial, found in Homo sapiens (Human).